A 130-amino-acid chain; its full sequence is MTGNDPLANALSGVDNAESVGHLSHEIQPASNVIGSVLEVFYDRGYINGFEFVDDGKAGRFEVELSGGINECGAVKPRYSAGADEFERWEKRYLPARDYGALIVTTSHGVMSHYEARETGIGGQVIAYVY.

The protein belongs to the universal ribosomal protein uS8 family. In terms of assembly, part of the 30S ribosomal subunit.

Functionally, one of the primary rRNA binding proteins, it binds directly to 16S rRNA central domain where it helps coordinate assembly of the platform of the 30S subunit. This Haloquadratum walsbyi (strain DSM 16790 / HBSQ001) protein is Small ribosomal subunit protein uS8.